The primary structure comprises 622 residues: UvrABC system protein C (622 aa).

Positions 12–91 (SSPGVYIMKD…IKKYRPKYNF (80 aa)) constitute a GIY-YIG domain. The UVR domain maps to 201-236 (REILKIFRERMSAAAAAEKYEKAARFRDLIRSIEVT).

It belongs to the UvrC family. Interacts with UvrB in an incision complex.

It localises to the cytoplasm. The UvrABC repair system catalyzes the recognition and processing of DNA lesions. UvrC both incises the 5' and 3' sides of the lesion. The N-terminal half is responsible for the 3' incision and the C-terminal half is responsible for the 5' incision. The protein is UvrABC system protein C of Geotalea daltonii (strain DSM 22248 / JCM 15807 / FRC-32) (Geobacter daltonii).